The primary structure comprises 90 residues: UPF0237 protein PAE3582 (90 aa).

One can recognise an ACT domain in the interval 5–74; it reads VVSVLGADRV…LEEEGKRLGV (70 aa).

The protein belongs to the UPF0237 family.

The chain is UPF0237 protein PAE3582 from Pyrobaculum aerophilum (strain ATCC 51768 / DSM 7523 / JCM 9630 / CIP 104966 / NBRC 100827 / IM2).